The chain runs to 1641 residues: Lysine-specific demethylase 6B (1641 aa).

4 disordered regions span residues 42 to 89 (LPGG…LHGK), 188 to 682 (YGAK…PLED), 704 to 808 (LDES…LLKS), and 824 to 1085 (GAAV…VSRA). The segment covering 214-223 (LSGPSGEEGL) has biased composition (low complexity). At serine 224 the chain carries Phosphoserine. The segment covering 242 to 268 (PGLPLPPPPPPPPPPPPPPPPPPPPLP) has biased composition (pro residues). Basic and acidic residues predominate over residues 293-309 (GPERKGSAPPERQEQRH). Low complexity predominate over residues 312–326 (PHSYPYPAPAYSAHP). Residues 361–372 (DLRESRVQRSRM) are compositionally biased toward basic and acidic residues. Low complexity predominate over residues 396–415 (PGTSSSSSSSSSSNNTGLRG). The segment covering 467-488 (PGTPSSPPPPCPRLLRPPPPPA) has biased composition (pro residues). A compositionally biased stretch (low complexity) spans 552–568 (TTTSSSSSSNSHSSSPT). 2 stretches are compositionally biased toward pro residues: residues 597–613 (QDPPLPPLTLALPPAPP) and 645–660 (GPPPGPVSKAPQPVPP). Basic and acidic residues predominate over residues 704-713 (LDESIRKEEE). Residues 743–766 (TAPATTTAAPTTATTTTTTTTTTT) are compositionally biased toward low complexity. A compositionally biased stretch (pro residues) spans 774 to 801 (PPALPPPPPLAKFPPPPQPQPPPPPPAS). Low complexity predominate over residues 855–879 (VAPSAQGSPKPSVSSSSQFSTSGGP). A compositionally biased stretch (pro residues) spans 891–908 (APGPVTPAQLPPPLPLPP). Positions 918–931 (EISRACETLVERVG) are enriched in basic and acidic residues. Basic residues predominate over residues 974–987 (GKRRQKEHRRHRRA). Residues 988-1001 (CRDSVGRRPREGRA) show a composition bias toward basic and acidic residues. A compositionally biased stretch (basic residues) spans 1002–1014 (KAKAKAPKEKSRR). Positions 1047–1066 (APAPPPAPAPAAQPTPPSAP) are enriched in pro residues. Lysine 1107 is covalently cross-linked (Glycyl lysine isopeptide (Lys-Gly) (interchain with G-Cter in SUMO2)). The tract at residues 1286-1323 (FQESLQEERESEDEESEEPDSTTGTSPSSAPDPKNHHI) is disordered. Residues 1294–1305 (RESEDEESEEPD) are compositionally biased toward acidic residues. The segment covering 1306 to 1317 (STTGTSPSSAPD) has biased composition (low complexity). The JmjC domain occupies 1337–1500 (RWKPQLQELL…YQLALERYEW (164 aa)). The Fe cation site is built by histidine 1388, glutamate 1390, and histidine 1468. Zn(2+) is bound by residues cysteine 1573, cysteine 1576, cysteine 1600, and cysteine 1603.

It belongs to the UTX family. Interacts with TLE1. Component of the MLL4 complex, at least composed of KMT2B/MLL4, ASH2L, RBBP5, WDR5, and KDM6B. Interacts with TBX21, SMARCA4, SMARCC1 and SMARCC2. Requires L-ascorbate as cofactor. Fe(2+) is required as a cofactor.

Its subcellular location is the nucleus. The catalysed reaction is N(6),N(6),N(6)-trimethyl-L-lysyl(27)-[histone H3] + 2 2-oxoglutarate + 2 O2 = N(6)-methyl-L-lysyl(27)-[histone H3] + 2 formaldehyde + 2 succinate + 2 CO2. Functionally, histone demethylase that specifically demethylates 'Lys-27' of histone H3, thereby playing a central role in histone code. Demethylates trimethylated and dimethylated H3 'Lys-27'. Plays a central role in regulation of posterior development, by regulating HOX gene expression. Involved in inflammatory response by participating in macrophage differentiation in case of inflammation by regulating gene expression and macrophage differentiation. Plays a demethylase-independent role in chromatin remodeling to regulate T-box family member-dependent gene expression by acting as a link between T-box factors and the SMARCA4-containing SWI/SNF remodeling complex. In Mus musculus (Mouse), this protein is Lysine-specific demethylase 6B (Kdm6b).